Here is a 190-residue protein sequence, read N- to C-terminus: Recombination protein RecR (190 aa).

The C4-type zinc finger occupies 58–73 (CEQCGALSENELCEIC). In terms of domain architecture, Toprim spans 81–167 (NILCIVESPK…TFSKIAQGIP (87 aa)).

This sequence belongs to the RecR family.

May play a role in DNA repair. It seems to be involved in an RecBC-independent recombinational process of DNA repair. It may act with RecF and RecO. The sequence is that of Recombination protein RecR from Campylobacter jejuni (strain RM1221).